Reading from the N-terminus, the 459-residue chain is NADH-ubiquinone oxidoreductase chain 4 (459 aa).

A run of 13 helical transmembrane segments spans residues 22–42 (MIWINTTTHSLIISIIPLLFF), 60–80 (PLTTPLLMLTTWLLPLTIMAS), 94–112 (LYLSMLISLQISLIMTFTA), 113–133 (TELIMFYIFFEATLIPTLVII), 145–165 (AGTYFLFYTLVGSLPLLIALI), 196–216 (WLAYTMAFMVKMPLYGLHLWL), 224–244 (PIAGSMMLAAVLLKLGGYGMM), 257–277 (MAYPFLALSLWGMIMTSSISL), 284–303 (SLIAYSSISHMALVVAAILI), 308–330 (SFTGAVVLMIAHGLTSSLLFCLA), 351–371 (LLPLMALWWLLASLANLALPP), 391–411 (TTLLLTGSNMLITALYSLYMF), and 435–455 (ILMFMHLSPILLLSLNPDIIT).

This sequence belongs to the complex I subunit 4 family. In terms of assembly, core subunit of respiratory chain NADH dehydrogenase (Complex I) which is composed of 45 different subunits.

It is found in the mitochondrion inner membrane. It carries out the reaction a ubiquinone + NADH + 5 H(+)(in) = a ubiquinol + NAD(+) + 4 H(+)(out). Its function is as follows. Core subunit of the mitochondrial membrane respiratory chain NADH dehydrogenase (Complex I) which catalyzes electron transfer from NADH through the respiratory chain, using ubiquinone as an electron acceptor. Essential for the catalytic activity and assembly of complex I. The chain is NADH-ubiquinone oxidoreductase chain 4 (MT-ND4) from Gorilla gorilla gorilla (Western lowland gorilla).